The sequence spans 70 residues: UPF0337 protein BC_3635 (70 aa).

Belongs to the UPF0337 (CsbD) family.

This Bacillus cereus (strain ATCC 14579 / DSM 31 / CCUG 7414 / JCM 2152 / NBRC 15305 / NCIMB 9373 / NCTC 2599 / NRRL B-3711) protein is UPF0337 protein BC_3635.